A 78-amino-acid polypeptide reads, in one-letter code: UPF0612 protein new22 (78 aa).

It belongs to the UPF0612 family.

This chain is UPF0612 protein new22 (new22), found in Schizosaccharomyces pombe (strain 972 / ATCC 24843) (Fission yeast).